The following is a 461-amino-acid chain: Transforming growth factor beta-1-induced transcript 1 protein (461 aa).

Methionine 1 bears the N-acetylmethionine mark. The tract at residues 1–87 (MEDLDALLSD…PFSSSSGVLG (87 aa)) is disordered. The tract at residues 1–200 (MEDLDALLSD…GSPSPPEPTG (200 aa)) is transcription activation. The interval 1-240 (MEDLDALLSD…CNKPIAGQVV (240 aa)) is interaction with PTK2B/PYK2. Positions 3–15 (DLDALLSDLETTT) match the LD motif 1 motif. The residue at position 33 (threonine 33) is a Phosphothreonine. A Phosphotyrosine modification is found at tyrosine 38. The span at 40–52 (HQPQTGSGESSGA) shows a compositional bias: polar residues. Phosphotyrosine; by FAK2 and FYN is present on tyrosine 60. Residue serine 68 is modified to Phosphoserine. Positions 83 to 136 (SGVLGTGLCELDRLLQELNATQFNITDEIMSQFPSSKVASGEQKEDQSEDKKRP) are interaction with PTK2/FAK1. Residues 92-104 (ELDRLLQELNATQ) carry the LD motif 2 motif. Residues 116–152 (PSSKVASGEQKEDQSEDKKRPSLPSSPSPGLPKASAT) form a disordered region. A compositionally biased stretch (basic and acidic residues) spans 124-135 (EQKEDQSEDKKR). 6 positions are modified to phosphoserine: serine 137, serine 140, serine 141, serine 143, serine 164, and serine 186. Positions 157–168 (ELDRLMASLSDF) match the LD motif 3 motif. The interval 172-205 (NHLPASGPTQPPVVSSTNEGSPSPPEPTGKGSLD) is disordered. A compositionally biased stretch (polar residues) spans 183 to 192 (PVVSSTNEGS). Threonine 188 carries the phosphothreonine modification. Residues serine 192 and serine 194 each carry the phosphoserine modification. The LD motif 4 signature appears at 203 to 215 (SLDTMLGLLQSDL). 4 consecutive LIM zinc-binding domains span residues 226–285 (GLCG…RFSP), 286–343 (RCGF…QLFA), 344–403 (PRCQ…RRGS), and 404–461 (LCAT…KLFG). Serine 403 is subject to Phosphoserine. Threonine 407 bears the Phosphothreonine mark.

Belongs to the paxillin family. Homooligomer. Interacts with PPARG. Interacts with TRAF4. Interacts with CRIP2. Interacts with HSPB1. Interacts with ILK. Interacts with LIMS1 and LIMS2. Interacts with NCK2. Interacts with NUDT16L1. Interacts with PAK. Interacts with PTPN12. Interacts with TCF3. Interacts with TCF7L2. Interacts with VCL. Interacts (via LD motif 3) with GIT1. Also interacts with GIT2. Forms a complex with ARHGEF7. Interacts with AR/androgen receptor in a ligand-dependent manner. Interacts with CSK. Interacts with PTK2/FAK1 and PTK2B/PYK2. Interacts with SLC6A3 and SLC6A4. Interacts with NR3C1. Interacts with SMAD3. Interacts with MAPK15. Interacts with SRC. Interacts with LYN. Interacts with talin. Interacts (via LIM zinc-binding domain 2) with CBLC (via RING-type zinc finger); the interaction is direct and enhances CBLC E3 ubiquitin-protein ligase activity. Interacts with PARVA. Interacts with PXN. Phosphorylated by gonadotropin-releasing hormone-activated SRC. Expressed in platelets, smooth muscle and prostate stromal cells (at protein level).

It is found in the cell junction. Its subcellular location is the focal adhesion. The protein localises to the nucleus matrix. The protein resides in the cytoplasm. It localises to the cytoskeleton. Functionally, functions as a molecular adapter coordinating multiple protein-protein interactions at the focal adhesion complex and in the nucleus. Links various intracellular signaling modules to plasma membrane receptors and regulates the Wnt and TGFB signaling pathways. May also regulate SLC6A3 and SLC6A4 targeting to the plasma membrane hence regulating their activity. In the nucleus, functions as a nuclear receptor coactivator regulating glucocorticoid, androgen, mineralocorticoid and progesterone receptor transcriptional activity. May play a role in the processes of cell growth, proliferation, migration, differentiation and senescence. May have a zinc-dependent DNA-binding activity. The polypeptide is Transforming growth factor beta-1-induced transcript 1 protein (TGFB1I1) (Homo sapiens (Human)).